The primary structure comprises 350 residues: S-adenosylmethionine:tRNA ribosyltransferase-isomerase (350 aa).

The protein belongs to the QueA family. Monomer.

Its subcellular location is the cytoplasm. It carries out the reaction 7-aminomethyl-7-carbaguanosine(34) in tRNA + S-adenosyl-L-methionine = epoxyqueuosine(34) in tRNA + adenine + L-methionine + 2 H(+). It functions in the pathway tRNA modification; tRNA-queuosine biosynthesis. Its function is as follows. Transfers and isomerizes the ribose moiety from AdoMet to the 7-aminomethyl group of 7-deazaguanine (preQ1-tRNA) to give epoxyqueuosine (oQ-tRNA). The polypeptide is S-adenosylmethionine:tRNA ribosyltransferase-isomerase (Aliivibrio fischeri (strain ATCC 700601 / ES114) (Vibrio fischeri)).